Reading from the N-terminus, the 673-residue chain is Ion-translocating oxidoreductase complex subunit C (673 aa).

4Fe-4S ferredoxin-type domains lie at 368 to 397 and 407 to 436; these read MGAP…QQLY and KATA…VQYF. 8 residues coordinate [4Fe-4S] cluster: C377, C380, C383, C387, C416, C419, C422, and C426. Disordered regions lie at residues 534 to 553 and 563 to 653; these read QARA…SGGA and IARA…AAVA.

It belongs to the 4Fe4S bacterial-type ferredoxin family. RnfC subfamily. In terms of assembly, the complex is composed of six subunits: RsxA, RsxB, RsxC, RsxD, RsxE and RsxG. It depends on [4Fe-4S] cluster as a cofactor.

Its subcellular location is the cell inner membrane. Its function is as follows. Part of a membrane-bound complex that couples electron transfer with translocation of ions across the membrane. Required to maintain the reduced state of SoxR. The chain is Ion-translocating oxidoreductase complex subunit C from Salmonella gallinarum (strain 287/91 / NCTC 13346).